The following is a 454-amino-acid chain: UPF0210 protein BAD_1323 (454 aa).

This sequence belongs to the UPF0210 family. As to quaternary structure, homodimer.

The sequence is that of UPF0210 protein BAD_1323 from Bifidobacterium adolescentis (strain ATCC 15703 / DSM 20083 / NCTC 11814 / E194a).